The chain runs to 340 residues: Phenylalanine--tRNA ligase alpha subunit (340 aa).

Glu-255 is a binding site for Mg(2+).

The protein belongs to the class-II aminoacyl-tRNA synthetase family. Phe-tRNA synthetase alpha subunit type 1 subfamily. As to quaternary structure, tetramer of two alpha and two beta subunits. It depends on Mg(2+) as a cofactor.

It localises to the cytoplasm. It catalyses the reaction tRNA(Phe) + L-phenylalanine + ATP = L-phenylalanyl-tRNA(Phe) + AMP + diphosphate + H(+). This Syntrophomonas wolfei subsp. wolfei (strain DSM 2245B / Goettingen) protein is Phenylalanine--tRNA ligase alpha subunit.